Consider the following 115-residue polypeptide: Probable 4-amino-4-deoxy-L-arabinose-phosphoundecaprenol flippase subunit ArnE (115 aa).

The next 3 helical transmembrane spans lie at 42–62 (PWPWLALLALGLGLLCWLLLL), 65–85 (VEVGSAYPMLALNFVLVTLAA), and 93–112 (VDRRHLAGLLLIVAGVALLG). An EamA domain is found at 46-113 (LALLALGLGL…IVAGVALLGR (68 aa)).

It belongs to the ArnE family. Heterodimer of ArnE and ArnF.

Its subcellular location is the cell inner membrane. The protein operates within bacterial outer membrane biogenesis; lipopolysaccharide biosynthesis. Functionally, translocates 4-amino-4-deoxy-L-arabinose-phosphoundecaprenol (alpha-L-Ara4N-phosphoundecaprenol) from the cytoplasmic to the periplasmic side of the inner membrane. The protein is Probable 4-amino-4-deoxy-L-arabinose-phosphoundecaprenol flippase subunit ArnE of Pseudomonas aeruginosa (strain LESB58).